The chain runs to 95 residues: Opiscorpine-3 (95 aa).

An N-terminal signal peptide occupies residues 1–19; it reads MNNKLTALIFLGLLAIASC. In terms of domain architecture, BetaSPN-type CS-alpha/beta spans 55-95; that stretch reads EFMCVANVDMTKSCDTHCQKASGEKGYCHGTKCKCGVPLSY. Disulfide bonds link C58–C82, C68–C87, and C72–C89.

Belongs to the long chain scorpion toxin family. Class 3 subfamily. Expressed by the venom gland.

It localises to the secreted. Functionally, has antimicrobial activity against yeasts and bacteria. The chain is Opiscorpine-3 from Opistophthalmus carinatus (African yellow leg scorpion).